The primary structure comprises 259 residues: Short chain dehydrogenase ausX (259 aa).

Positions 13, 59, 121, 153, 157, and 186 each coordinate NADP(+). The active-site Proton acceptor is the Tyr-153. Tyr-153 serves as the catalytic Proton donor. The active-site Lowers pKa of active site Tyr is Lys-157.

It belongs to the short-chain dehydrogenases/reductases (SDR) family.

The protein operates within secondary metabolite biosynthesis; terpenoid biosynthesis. Its function is as follows. Short chain dehydrogenase; part of the gene cluster A that mediates the biosynthesis of the fungal meroterpenoid acetoxydehydroaustin. The first step of the pathway is the synthesis of 3,5-dimethylorsellinic acid by the polyketide synthase ausA. 3,5-dimethylorsellinic acid is then prenylated by the polyprenyl transferase ausN. Further epoxidation by the FAD-dependent monooxygenase ausM and cyclization by the probable terpene cyclase ausL lead to the formation of protoaustinoid A. Protoaustinoid A is then oxidized to spiro-lactone preaustinoid A3 by the combined action of the FAD-binding monooxygenases ausB and ausC, and the dioxygenase ausE. Acid-catalyzed keto-rearrangement and ring contraction of the tetraketide portion of preaustinoid A3 by ausJ lead to the formation of preaustinoid A4. The aldo-keto reductase ausK, with the help of ausH, is involved in the next step by transforming preaustinoid A4 into isoaustinone which is in turn hydroxylated by the P450 monooxygenase ausI to form austinolide. The cytochrome P450 monooxygenase ausG then modifies austinolide to austinol. Austinol is further acetylated to austin by the O-acetyltransferase ausP, which spontaneously changes to dehydroaustin. The cytochrome P450 monooxygenase then converts dehydroaustin is into 7-dehydrodehydroaustin. The hydroxylation catalyzed by ausR permits the second O-acetyltransferase ausQ to add an additional acetyl group to the molecule, leading to the formation of acetoxydehydroaustin. Due to genetic rearrangements of the clusters and the subsequent loss of some enzymes, the end product of the Penicillium brasilianum austinoid biosynthesis clusters is acetoxydehydroaustin. The polypeptide is Short chain dehydrogenase ausX (Penicillium brasilianum).